A 145-amino-acid polypeptide reads, in one-letter code: Bacilliredoxin SSP1241 (145 aa).

The protein belongs to the bacilliredoxin family.

The sequence is that of Bacilliredoxin SSP1241 from Staphylococcus saprophyticus subsp. saprophyticus (strain ATCC 15305 / DSM 20229 / NCIMB 8711 / NCTC 7292 / S-41).